The following is a 101-amino-acid chain: Large ribosomal subunit protein bL21 (101 aa).

It belongs to the bacterial ribosomal protein bL21 family. As to quaternary structure, part of the 50S ribosomal subunit. Contacts protein L20.

This protein binds to 23S rRNA in the presence of protein L20. The polypeptide is Large ribosomal subunit protein bL21 (Metamycoplasma arthritidis (strain 158L3-1) (Mycoplasma arthritidis)).